The chain runs to 400 residues: MTFQTLDDLDDGQRVLVRLDLNSPVEDGTVQDNRRFDRHAETVSELVDRGFEVAVLAHQGRPGRDDFVSLAQHAEILADHIDHDVDFVDETYGPQAIHDIADLDGGDVLVLENTRMCDDELPEEDPEVKSQTEFVQTLKDEFDAYINDAYSAAHRSHASLVGFPLVMDAYAGRVMETEYEANTAIAEKEFDGQVTMVVGGTKATDVIDVMTHLDEKVDDFLLGGIAGELFLRAAGYPVGYDIDDANLYDEQWEENSEKIESMLEDHRDQITLAVDLAYEDDGDRAEQAVDDIEEKSVSYLDVGSETVMEYSPVIRDSEAVFVKGALGMFEDERFSVGTAGVLEAIADTDCFSVVGGGDTSRAIEMYGMEEDEFGHVSIAGGAYIRALTGAELVGVEVLQR.

Substrate is bound by residues 20–22 (DLN), R35, 58–61 (HQGR), R115, and R155. ATP is bound by residues E330 and 356–359 (GGDT).

This sequence belongs to the phosphoglycerate kinase family. As to quaternary structure, monomer.

The protein resides in the cytoplasm. The catalysed reaction is (2R)-3-phosphoglycerate + ATP = (2R)-3-phospho-glyceroyl phosphate + ADP. The protein operates within carbohydrate degradation; glycolysis; pyruvate from D-glyceraldehyde 3-phosphate: step 2/5. This is Phosphoglycerate kinase from Haloarcula marismortui (strain ATCC 43049 / DSM 3752 / JCM 8966 / VKM B-1809) (Halobacterium marismortui).